We begin with the raw amino-acid sequence, 494 residues long: Nuclear distribution protein PAC1 (494 aa).

Residues 14 to 46 (QKNELDKSVLRYLNWNYKQTVRHEHAQDYESVR) enclose the LisH domain. Residues 90–123 (NSIVRLQKKIIELEQNTETLVSQIKDLNTQVSEL) adopt a coiled-coil conformation. WD repeat units follow at residues 153-192 (NVES…IPLA), 196-244 (SHTK…CKFQ), 251-292 (GHEH…SLKT), 295-334 (PHSQ…SVGT), 347-395 (HFIE…LMAH), 415-454 (GHLS…HVWE), and 457-492 (HTGF…SNVF).

Belongs to the WD repeat LIS1/nudF family. As to quaternary structure, self-associates. Interacts with NDL1 and dynein.

The protein resides in the cytoplasm. It localises to the cytoskeleton. It is found in the spindle pole. Its function is as follows. Positively regulates the activity of the minus-end directed microtubule motor protein dynein. Plays a central role in positioning the mitotic spindle at the bud neck during cell division. Targets cytoplasmic dynein to microtubule plus ends, thereby promoting dynein-mediated microtubule sliding along the bud cortex and consequently the movement of the mitotic spindle to the bud neck. The polypeptide is Nuclear distribution protein PAC1 (Saccharomyces cerevisiae (strain JAY291) (Baker's yeast)).